The following is a 148-amino-acid chain: Lysozyme C (148 aa).

Residues 1–18 (MKALIVLGLVLLSVMVQG) form the signal peptide. The region spanning 19–148 (KVFERCELAR…VRQYVQGCGV (130 aa)) is the C-type lysozyme domain. Disulfide bonds link C24/C146, C48/C134, C83/C99, and C95/C113. Residues E53 and D71 contribute to the active site.

This sequence belongs to the glycosyl hydrolase 22 family. Monomer.

It catalyses the reaction Hydrolysis of (1-&gt;4)-beta-linkages between N-acetylmuramic acid and N-acetyl-D-glucosamine residues in a peptidoglycan and between N-acetyl-D-glucosamine residues in chitodextrins.. Lysozymes have primarily a bacteriolytic function; those in tissues and body fluids are associated with the monocyte-macrophage system and enhance the activity of immunoagents. In Gorilla gorilla gorilla (Western lowland gorilla), this protein is Lysozyme C (LYZ).